Here is a 161-residue protein sequence, read N- to C-terminus: Efficient mitochondria targeting-associated protein 19 (161 aa).

Over 1 to 10 the chain is Cytoplasmic; that stretch reads MKLGHREQQF. An EXPERA domain is found at 7-159; sequence EQQFYLWYFI…PTFLIPLRLC (153 aa). A helical transmembrane segment spans residues 11 to 31; sequence YLWYFIVHIPITIFIDSSVVI. Over 32–61 the chain is Lumenal; it reads PAKWQLGIAQKVVSDHIAKQHDFLLSEKPE. The helical transmembrane segment at 62–82 threads the bilayer; that stretch reads WLYWFVVLELVLQLPLFVYFV. The Cytoplasmic segment spans residues 83–101; that stretch reads NKFWNSSELQVNTNSRLKK. Residues 102 to 122 form a helical membrane-spanning segment; sequence WLRIYGWNASLTTLICIVVIF. The Lumenal segment spans residues 123 to 141; it reads KRGYIPYDVLKTSLSMTQK. A helical membrane pass occupies residues 142–160; sequence CQLASVYLPTFLIPLRLCF. A topological domain (cytoplasmic) is located at residue valine 161.

This sequence belongs to the TMEM97/sigma-2 receptor family.

The protein resides in the endoplasmic reticulum membrane. In terms of biological role, part of an import route for newly synthesized mitochondrial proteins termed the ER-SURF pathway (ER surface-mediated protein targeting), which retrieves mitochondrial precursor proteins from the ER surface and reroutes them to mitochondria for efficient mitochondrial import. Acts as a quality control factor in the ER, promoting the proteolytic degradation of nonproductive and extramitochondrial precursor proteins in the ER membrane thus removing them from the ER surface. In Saccharomyces cerevisiae (strain ATCC 204508 / S288c) (Baker's yeast), this protein is Efficient mitochondria targeting-associated protein 19.